The chain runs to 179 residues: MNETLKQELLQNIREVKDYPKKGILFKDITTLLNYPKLFNKLIDALKKRYTPLNVDFIVGIEARGFILGSALAYALGVGFVPVRKKGKLPAHTLSQSYSLEYGNDSIEIHSDAFRGVKGVKVVLIDDLLATGGTALASLELIKALQAECIEACFLIGLKELLGIQLLEEQVKTFCLLEC.

This sequence belongs to the purine/pyrimidine phosphoribosyltransferase family. As to quaternary structure, homodimer.

It is found in the cytoplasm. It catalyses the reaction AMP + diphosphate = 5-phospho-alpha-D-ribose 1-diphosphate + adenine. Its pathway is purine metabolism; AMP biosynthesis via salvage pathway; AMP from adenine: step 1/1. Its function is as follows. Catalyzes a salvage reaction resulting in the formation of AMP, that is energically less costly than de novo synthesis. This chain is Adenine phosphoribosyltransferase, found in Helicobacter acinonychis (strain Sheeba).